Here is a 278-residue protein sequence, read N- to C-terminus: Phosphatidylglycerol--prolipoprotein diacylglyceryl transferase (278 aa).

4 helical membrane-spanning segments follow: residues 12–32, 44–64, 86–106, and 113–133; these read FGPL…LIGL, LENG…VIGA, IWEG…TLIL, and QPFL…QAIG. Arginine 134 lines the a 1,2-diacyl-sn-glycero-3-phospho-(1'-sn-glycerol) pocket. The next 3 helical transmembrane spans lie at 173–193, 203–223, and 246–266; these read PTFL…LVLF, FPAG…RIWI, and IAQL…WWLK.

It belongs to the Lgt family.

Its subcellular location is the cell inner membrane. It carries out the reaction L-cysteinyl-[prolipoprotein] + a 1,2-diacyl-sn-glycero-3-phospho-(1'-sn-glycerol) = an S-1,2-diacyl-sn-glyceryl-L-cysteinyl-[prolipoprotein] + sn-glycerol 1-phosphate + H(+). The protein operates within protein modification; lipoprotein biosynthesis (diacylglyceryl transfer). In terms of biological role, catalyzes the transfer of the diacylglyceryl group from phosphatidylglycerol to the sulfhydryl group of the N-terminal cysteine of a prolipoprotein, the first step in the formation of mature lipoproteins. The chain is Phosphatidylglycerol--prolipoprotein diacylglyceryl transferase from Parasynechococcus marenigrum (strain WH8102).